A 380-amino-acid polypeptide reads, in one-letter code: Omega-3 fatty acid desaturase, endoplasmic reticulum (380 aa).

Residues 59–78 form a helical membrane-spanning segment; it reads VLVVTALAASAISFNSWFFW. The short motif at 97–101 is the Histidine box-1 element; sequence HDCGH. The Histidine box-2 signature appears at 133-137; that stretch reads HRTHH. The next 2 membrane-spanning stretches (helical) occupy residues 208–231 and 238–256; these read GVVTSTLCWGIVLSVLLYLSLTIG and LYGVPYLIFVMWLDFVTYL. The Histidine box-3 signature appears at 300 to 304; sequence HVIHH.

Belongs to the fatty acid desaturase type 1 family.

The protein resides in the endoplasmic reticulum membrane. It participates in lipid metabolism; polyunsaturated fatty acid biosynthesis. In terms of biological role, microsomal (ER) omega-3 fatty acid desaturase introduces the third double bond in the biosynthesis of 18:3 fatty acids, important constituents of plant membranes. It is thought to use cytochrome b5 as an electron donor and to act on fatty acids esterified to phosphatidylcholine and, possibly, other phospholipids. This is Omega-3 fatty acid desaturase, endoplasmic reticulum (ARG1) from Vigna radiata var. radiata (Mung bean).